The chain runs to 393 residues: Formate-dependent phosphoribosylglycinamide formyltransferase (393 aa).

Residues glutamate 22–leucine 23 and glutamate 82 each bind N(1)-(5-phospho-beta-D-ribosyl)glycinamide. Residues arginine 114, lysine 155, serine 160 to glutamine 165, glutamate 195 to isoleucine 198, and glutamate 203 each bind ATP. The ATP-grasp domain occupies arginine 119–leucine 308. Residues glutamate 267 and glutamate 279 each coordinate Mg(2+). N(1)-(5-phospho-beta-D-ribosyl)glycinamide is bound by residues aspartate 286, lysine 356, and arginine 363–arginine 364.

The protein belongs to the PurK/PurT family. Homodimer.

It catalyses the reaction N(1)-(5-phospho-beta-D-ribosyl)glycinamide + formate + ATP = N(2)-formyl-N(1)-(5-phospho-beta-D-ribosyl)glycinamide + ADP + phosphate + H(+). It participates in purine metabolism; IMP biosynthesis via de novo pathway; N(2)-formyl-N(1)-(5-phospho-D-ribosyl)glycinamide from N(1)-(5-phospho-D-ribosyl)glycinamide (formate route): step 1/1. Its function is as follows. Involved in the de novo purine biosynthesis. Catalyzes the transfer of formate to 5-phospho-ribosyl-glycinamide (GAR), producing 5-phospho-ribosyl-N-formylglycinamide (FGAR). Formate is provided by PurU via hydrolysis of 10-formyl-tetrahydrofolate. This chain is Formate-dependent phosphoribosylglycinamide formyltransferase, found in Azotobacter vinelandii (strain DJ / ATCC BAA-1303).